A 246-amino-acid chain; its full sequence is Probable hydroxyethylthiazole kinase (246 aa).

A substrate-binding site is contributed by M50. ATP-binding residues include R125 and T145. G172 is a substrate binding site.

Belongs to the Thz kinase family. The cofactor is Mg(2+).

The catalysed reaction is 5-(2-hydroxyethyl)-4-methylthiazole + ATP = 4-methyl-5-(2-phosphooxyethyl)-thiazole + ADP + H(+). The protein operates within cofactor biosynthesis; thiamine diphosphate biosynthesis; 4-methyl-5-(2-phosphoethyl)-thiazole from 5-(2-hydroxyethyl)-4-methylthiazole: step 1/1. Functionally, catalyzes the phosphorylation of the hydroxyl group of 4-methyl-5-beta-hydroxyethylthiazole (THZ). In Agrobacterium fabrum (strain C58 / ATCC 33970) (Agrobacterium tumefaciens (strain C58)), this protein is Probable hydroxyethylthiazole kinase (thiM).